A 395-amino-acid polypeptide reads, in one-letter code: Elongation factor Tu (395 aa).

Residues 10–204 (KPHVNVGTIG…AVDEYIPEPV (195 aa)) enclose the tr-type G domain. The G1 stretch occupies residues 19–26 (GHVDHGKT). 19–26 (GHVDHGKT) serves as a coordination point for GTP. Position 26 (T26) interacts with Mg(2+). The G2 stretch occupies residues 60-64 (GITIA). Residues 81–84 (DCPG) are G3. GTP is bound by residues 81-85 (DCPGH) and 136-139 (NKVD). Residues 136–139 (NKVD) form a G4 region. The interval 174 to 176 (SAL) is G5.

The protein belongs to the TRAFAC class translation factor GTPase superfamily. Classic translation factor GTPase family. EF-Tu/EF-1A subfamily. As to quaternary structure, monomer.

The protein resides in the cytoplasm. It catalyses the reaction GTP + H2O = GDP + phosphate + H(+). Its function is as follows. GTP hydrolase that promotes the GTP-dependent binding of aminoacyl-tRNA to the A-site of ribosomes during protein biosynthesis. This Exiguobacterium sp. (strain ATCC BAA-1283 / AT1b) protein is Elongation factor Tu.